The chain runs to 465 residues: Siroheme synthase (465 aa).

Residues 1–203 (MDFLPLFHSL…GRPAEAERLL (203 aa)) are precorrin-2 dehydrogenase /sirohydrochlorin ferrochelatase. NAD(+) is bound by residues 22 to 23 (EV) and 43 to 44 (PQ). Ser128 is modified (phosphoserine). Residues 217 to 465 (GEVYLVGAGP…AWFEGAREDA (249 aa)) are uroporphyrinogen-III C-methyltransferase. Pro226 is a binding site for S-adenosyl-L-methionine. The active-site Proton acceptor is Asp249. The active-site Proton donor is the Lys271. Residues 302–304 (GGD), Ile307, 332–333 (TA), Met384, and Gly413 each bind S-adenosyl-L-methionine.

The protein in the N-terminal section; belongs to the precorrin-2 dehydrogenase / sirohydrochlorin ferrochelatase family. This sequence in the C-terminal section; belongs to the precorrin methyltransferase family.

It carries out the reaction uroporphyrinogen III + 2 S-adenosyl-L-methionine = precorrin-2 + 2 S-adenosyl-L-homocysteine + H(+). It catalyses the reaction precorrin-2 + NAD(+) = sirohydrochlorin + NADH + 2 H(+). The enzyme catalyses siroheme + 2 H(+) = sirohydrochlorin + Fe(2+). The protein operates within cofactor biosynthesis; adenosylcobalamin biosynthesis; precorrin-2 from uroporphyrinogen III: step 1/1. Its pathway is cofactor biosynthesis; adenosylcobalamin biosynthesis; sirohydrochlorin from precorrin-2: step 1/1. It participates in porphyrin-containing compound metabolism; siroheme biosynthesis; precorrin-2 from uroporphyrinogen III: step 1/1. It functions in the pathway porphyrin-containing compound metabolism; siroheme biosynthesis; siroheme from sirohydrochlorin: step 1/1. The protein operates within porphyrin-containing compound metabolism; siroheme biosynthesis; sirohydrochlorin from precorrin-2: step 1/1. Its function is as follows. Multifunctional enzyme that catalyzes the SAM-dependent methylations of uroporphyrinogen III at position C-2 and C-7 to form precorrin-2 via precorrin-1. Then it catalyzes the NAD-dependent ring dehydrogenation of precorrin-2 to yield sirohydrochlorin. Finally, it catalyzes the ferrochelation of sirohydrochlorin to yield siroheme. The protein is Siroheme synthase of Pseudomonas aeruginosa (strain UCBPP-PA14).